Reading from the N-terminus, the 200-residue chain is Proteasome subunit beta 2 (200 aa).

Position 1 (Met1) is a propeptide, removed in mature form; by autocatalysis. Catalysis depends on Thr2, which acts as the Nucleophile.

It belongs to the peptidase T1B family. In terms of assembly, the 20S proteasome core is composed of 14 alpha and 14 beta subunits that assemble into four stacked heptameric rings, resulting in a barrel-shaped structure. The two inner rings, each composed of seven catalytic beta subunits, are sandwiched by two outer rings, each composed of seven alpha subunits. The catalytic chamber with the active sites is on the inside of the barrel. Has a gated structure, the ends of the cylinder being occluded by the N-termini of the alpha-subunits. Is capped at one or both ends by the proteasome regulatory ATPase, PAN.

The protein localises to the cytoplasm. The catalysed reaction is Cleavage of peptide bonds with very broad specificity.. The formation of the proteasomal ATPase PAN-20S proteasome complex, via the docking of the C-termini of PAN into the intersubunit pockets in the alpha-rings, triggers opening of the gate for substrate entry. Interconversion between the open-gate and close-gate conformations leads to a dynamic regulation of the 20S proteasome proteolysis activity. Component of the proteasome core, a large protease complex with broad specificity involved in protein degradation. The protein is Proteasome subunit beta 2 of Pyrobaculum islandicum (strain DSM 4184 / JCM 9189 / GEO3).